A 177-amino-acid polypeptide reads, in one-letter code: Large ribosomal subunit protein uL6 (177 aa).

This sequence belongs to the universal ribosomal protein uL6 family. As to quaternary structure, part of the 50S ribosomal subunit.

This protein binds to the 23S rRNA, and is important in its secondary structure. It is located near the subunit interface in the base of the L7/L12 stalk, and near the tRNA binding site of the peptidyltransferase center. This is Large ribosomal subunit protein uL6 from Methylorubrum extorquens (strain CM4 / NCIMB 13688) (Methylobacterium extorquens).